The primary structure comprises 363 residues: MILKGKKLLFMAGGTGGHVYPALAVARAAAEQGSIIHWLGNQSGFEGKKVPEAGFIFHDIAVYGLRGNGVIGWLKAPFMIGRAVFQAKKIMQHIQPDVVIGMGGFASGPGGIAAKILNIPLLIHEQNAVMGLTNALLSRVANTILLASQQAAAKIALKYPYRVTGNPVREDITLLPAPEERFHYRSGRIRLLVLGGSQGAKAINLLLPQALSLLPEEQRPQVLHQTGARWLEKTQTEYAALNVHAEIVPFIDDMAKAYANADWVIARSGALTVSEIATAGLAALFIPFPYAVDDHQTMNAQCLAEVGAAAILEEKTLTADILATAIQSRQDRSALLTQAERARLCSDEKALGEILRAIKELCR.

Residues 15–17 (TGG), Asn-127, Arg-169, Ser-197, Ile-251, 270–275 (ALTVSE), and Gln-296 contribute to the UDP-N-acetyl-alpha-D-glucosamine site.

Belongs to the glycosyltransferase 28 family. MurG subfamily.

Its subcellular location is the cell inner membrane. The enzyme catalyses di-trans,octa-cis-undecaprenyl diphospho-N-acetyl-alpha-D-muramoyl-L-alanyl-D-glutamyl-meso-2,6-diaminopimeloyl-D-alanyl-D-alanine + UDP-N-acetyl-alpha-D-glucosamine = di-trans,octa-cis-undecaprenyl diphospho-[N-acetyl-alpha-D-glucosaminyl-(1-&gt;4)]-N-acetyl-alpha-D-muramoyl-L-alanyl-D-glutamyl-meso-2,6-diaminopimeloyl-D-alanyl-D-alanine + UDP + H(+). It functions in the pathway cell wall biogenesis; peptidoglycan biosynthesis. In terms of biological role, cell wall formation. Catalyzes the transfer of a GlcNAc subunit on undecaprenyl-pyrophosphoryl-MurNAc-pentapeptide (lipid intermediate I) to form undecaprenyl-pyrophosphoryl-MurNAc-(pentapeptide)GlcNAc (lipid intermediate II). The protein is UDP-N-acetylglucosamine--N-acetylmuramyl-(pentapeptide) pyrophosphoryl-undecaprenol N-acetylglucosamine transferase of Dichelobacter nodosus (strain VCS1703A).